The primary structure comprises 205 residues: MRGNNVNLKTVSGSAVELSEVAFGREFNEALVHQVVTAYLAGGRQGTRAQKSRAEVSGGGKKPFRQKGTGRARAGSIRSPIWVGGGKTFAARPQDWSQKVNRKMYRGAMQCILAELVRQDRLVLVEEFAVAAPKTKELLAKLNDLNAARALIVTDAVDENLYLAARNLPHVDVVDATAIDPVSLIAFDKVVMSVAAAKKIEVELG.

The disordered stretch occupies residues 47 to 70; that stretch reads TRAQKSRAEVSGGGKKPFRQKGTG.

This sequence belongs to the universal ribosomal protein uL4 family. As to quaternary structure, part of the 50S ribosomal subunit.

Its function is as follows. One of the primary rRNA binding proteins, this protein initially binds near the 5'-end of the 23S rRNA. It is important during the early stages of 50S assembly. It makes multiple contacts with different domains of the 23S rRNA in the assembled 50S subunit and ribosome. Functionally, forms part of the polypeptide exit tunnel. This is Large ribosomal subunit protein uL4 from Acinetobacter baylyi (strain ATCC 33305 / BD413 / ADP1).